The following is a 1186-amino-acid chain: Tricalbin-1 (1186 aa).

A disordered region spans residues 1 to 50; that stretch reads MAKEDTGVTAPKKPETAQVANINGIDKLEPPKTKEETESSKSVSSEKAAH. Topologically, residues 1–106 are cytoplasmic; the sequence is MAKEDTGVTA…NIIPDSLYGD (106 aa). The span at 26–39 shows a compositional bias: basic and acidic residues; the sequence is DKLEPPKTKEETES. A helical transmembrane segment spans residues 107 to 127; that stretch reads WYHSVAIFFIGGVASFALGHY. A topological domain (extracellular) is located at residue Lys-128. The helical transmembrane segment at 129–149 threads the bilayer; sequence FSMGSAFFVIVITSLLYRTSA. Residues 150–1186 are Cytoplasmic-facing; it reads KKYRGSIREL…HEMGEEETKF (1037 aa). One can recognise an SMP-LTD domain in the interval 172-375; sequence DYESLEWLNA…PPFSLQLNIP (204 aa). C2 domains lie at 366–487, 512–636, and 640–757; these read PPFS…RNLK, EKKL…IKIT, and RPVR…DKYE. The stretch at 795-822 forms a coiled coil; sequence LEEIQDLDKVNKKKKALELRKSAIDEKK. One can recognise a C2 4 domain in the interval 976 to 1094; that stretch reads PIDTKQLPAN…KVEGTTELDV (119 aa). Ser-1000 is subject to Phosphoserine. Ca(2+) is bound by residues Asp-1008, Asp-1014, Asp-1064, Asp-1066, Ser-1069, and Asp-1072.

The protein belongs to the tricalbin family. As to quaternary structure, interacts with TCB2 via its C-terminal domain. Ca(2+) serves as cofactor.

It localises to the cell membrane. The protein localises to the endoplasmic reticulum membrane. Its function is as follows. May play a role in membrane trafficking. The sequence is that of Tricalbin-1 (TCB1) from Saccharomyces cerevisiae (strain ATCC 204508 / S288c) (Baker's yeast).